A 256-amino-acid polypeptide reads, in one-letter code: 5'-nucleotidase YutF (256 aa).

It belongs to the HAD-like hydrolase superfamily. NagD family. Homodimer. Mg(2+) serves as cofactor.

The protein localises to the cytoplasm. The catalysed reaction is a ribonucleoside 5'-phosphate + H2O = a ribonucleoside + phosphate. It catalyses the reaction XMP + H2O = xanthosine + phosphate. Catalyzes the hydrolysis of various purine and pyrimidine 5'-nucleotides, showing preference for 5'-nucleoside monophosphates and exhibiting the highest catalytic activity toward 5'-XMP. Also shows a relatively high phosphohydrolase activity toward the nucleotide precursors ribose-5-phosphate (R5P) and 5-phosphoribosyl-1-pyrophosphate (PRPP), and toward the non-natural substrate p-nitrophenyl phosphate (pNPP). The protein is 5'-nucleotidase YutF (yutF) of Bacillus subtilis (strain 168).